The sequence spans 527 residues: T-complex protein 1 subunit beta (527 aa).

It belongs to the TCP-1 chaperonin family. In terms of assembly, heterooligomeric complex of about 850 to 900 kDa that forms two stacked rings, 12 to 16 nm in diameter.

The protein resides in the cytoplasm. In terms of biological role, molecular chaperone; assists the folding of proteins upon ATP hydrolysis. Known to play a role, in vitro, in the folding of actin and tubulin. The polypeptide is T-complex protein 1 subunit beta (Arabidopsis thaliana (Mouse-ear cress)).